The following is a 90-amino-acid chain: MSEVKRGVIVNYRMGRHTQDPRQCIIEFEGVESRSEAAQLIGKEVIWKHPETGKVIRGKVVDTHGNNGAVRVRFERGLPGQALGTEVTLK.

Belongs to the eukaryotic ribosomal protein eL33 family.

The protein is Large ribosomal subunit protein eL33 of Methanopyrus kandleri (strain AV19 / DSM 6324 / JCM 9639 / NBRC 100938).